Here is a 255-residue protein sequence, read N- to C-terminus: tRNA (guanine-N(7)-)-methyltransferase (255 aa).

4 residues coordinate S-adenosyl-L-methionine: E64, E89, D116, and D138. D138 is a catalytic residue. Residues K142, D174, and 212-215 each bind substrate; that span reads TRYE.

Belongs to the class I-like SAM-binding methyltransferase superfamily. TrmB family.

It carries out the reaction guanosine(46) in tRNA + S-adenosyl-L-methionine = N(7)-methylguanosine(46) in tRNA + S-adenosyl-L-homocysteine. It functions in the pathway tRNA modification; N(7)-methylguanine-tRNA biosynthesis. Its function is as follows. Catalyzes the formation of N(7)-methylguanine at position 46 (m7G46) in tRNA. The sequence is that of tRNA (guanine-N(7)-)-methyltransferase from Rhodospirillum rubrum (strain ATCC 11170 / ATH 1.1.1 / DSM 467 / LMG 4362 / NCIMB 8255 / S1).